Reading from the N-terminus, the 216-residue chain is GTP cyclohydrolase 1 (216 aa).

The interval 1-33 is disordered; that stretch reads MPQARGEGATPPTSLPNPSLKGVPLPDNPNNLE. Residues 24 to 33 show a composition bias toward low complexity; it reads PLPDNPNNLE. 3 residues coordinate Zn(2+): C102, H105, and C173.

The protein belongs to the GTP cyclohydrolase I family. In terms of assembly, toroid-shaped homodecamer, composed of two pentamers of five dimers.

It carries out the reaction GTP + H2O = 7,8-dihydroneopterin 3'-triphosphate + formate + H(+). Its pathway is cofactor biosynthesis; 7,8-dihydroneopterin triphosphate biosynthesis; 7,8-dihydroneopterin triphosphate from GTP: step 1/1. This is GTP cyclohydrolase 1 (folE) from Deinococcus radiodurans (strain ATCC 13939 / DSM 20539 / JCM 16871 / CCUG 27074 / LMG 4051 / NBRC 15346 / NCIMB 9279 / VKM B-1422 / R1).